The following is a 130-amino-acid chain: UPF0212 protein PF1486 (130 aa).

This sequence belongs to the UPF0212 family.

The polypeptide is UPF0212 protein PF1486 (Pyrococcus furiosus (strain ATCC 43587 / DSM 3638 / JCM 8422 / Vc1)).